The chain runs to 307 residues: Myeloid-associated differentiation marker-like protein 2 (307 aa).

2 MARVEL domains span residues 17–154 and 159–303; these read AVTS…ARPG and YMAT…RIRF. 7 consecutive transmembrane segments (helical) span residues 53-73, 90-110, 129-149, 163-183, 198-218, 232-252, and 278-298; these read FCVA…ACEF, AFAM…PLYF, LAAS…VALT, VSGL…GALV, VAVY…SVLG, VVYT…WPVF, and LVVA…LAYS.

The protein belongs to the MAL family.

The protein resides in the membrane. This chain is Myeloid-associated differentiation marker-like protein 2 (MYADML2), found in Bos taurus (Bovine).